A 140-amino-acid polypeptide reads, in one-letter code: ATP synthase epsilon chain (140 aa).

Belongs to the ATPase epsilon chain family. As to quaternary structure, F-type ATPases have 2 components, CF(1) - the catalytic core - and CF(0) - the membrane proton channel. CF(1) has five subunits: alpha(3), beta(3), gamma(1), delta(1), epsilon(1). CF(0) has three main subunits: a, b and c.

It localises to the cell inner membrane. In terms of biological role, produces ATP from ADP in the presence of a proton gradient across the membrane. This chain is ATP synthase epsilon chain, found in Xanthomonas oryzae pv. oryzae (strain PXO99A).